The primary structure comprises 206 residues: Large ribosomal subunit protein uL4 (206 aa).

Residues 48–78 form a disordered region; the sequence is THSVKTRGHVSGGGAKPWRQKGTGRARAGSN.

Belongs to the universal ribosomal protein uL4 family. As to quaternary structure, part of the 50S ribosomal subunit.

Its function is as follows. One of the primary rRNA binding proteins, this protein initially binds near the 5'-end of the 23S rRNA. It is important during the early stages of 50S assembly. It makes multiple contacts with different domains of the 23S rRNA in the assembled 50S subunit and ribosome. Forms part of the polypeptide exit tunnel. The polypeptide is Large ribosomal subunit protein uL4 (Lawsonia intracellularis (strain PHE/MN1-00)).